Consider the following 908-residue polypeptide: 26S proteasome non-ATPase regulatory subunit 2 (908 aa).

Methionine 1 bears the N-acetylmethionine mark. The tract at residues 1–52 (MEEGGRDKAPLQPQQPPATSPGSGDEKPSGKERRDAGDKDKEQELSEEDKQL) is disordered. The span at 24–52 (GDEKPSGKERRDAGDKDKEQELSEEDKQL) shows a compositional bias: basic and acidic residues. 2 positions are modified to phosphoserine: serine 29 and serine 147. Tyrosine 194 carries the post-translational modification Phosphotyrosine. Phosphoserine occurs at positions 361 and 363. PC repeat units follow at residues 409 to 442 (SAAA…YIKS), 443 to 479 (GALL…TMRL), 480 to 514 (GSIF…SMEV), 517 to 551 (VTAL…TELK), and 560 to 589 (LGLG…PFRS). Lysine 551 carries the N6-acetyllysine modification. Over residues 623-643 (KEKEEDKDKKEKKDKDKKEAP) the composition is skewed to basic and acidic residues. The interval 623–645 (KEKEEDKDKKEKKDKDKKEAPAD) is disordered. PC repeat units follow at residues 692 to 723 (LALA…EVSY) and 742 to 757 (AAML…KDPN). A required for interaction with UBLCP1 region spans residues 708-903 (DTLSKFSHDA…LEGFVILRKN (196 aa)).

This sequence belongs to the proteasome subunit S2 family. As to quaternary structure, component of the 19S proteasome regulatory particle complex. The 26S proteasome consists of a 20S core particle (CP) and two 19S regulatory subunits (RP). The regulatory particle is made of a lid composed of 9 subunits, a base containing 6 ATPases and few additional components including PSMD2. Interacts with RPGRIP1L. Interacts with CRY1 in a KDM8-dependent manner. Interacts (via C-terminus) with phosphatase UBLCP1 (via ubiquitin-like domain); the interaction recruits UBLCP1 to the 19S regulatory particle where it dephosphorylates 19S subunit PSMC2/RPT1 which impairs PSMC2 ATPase activity and disrupts 26S proteasome assembly.

Its function is as follows. Component of the 26S proteasome, a multiprotein complex involved in the ATP-dependent degradation of ubiquitinated proteins. This complex plays a key role in the maintenance of protein homeostasis by removing misfolded or damaged proteins, which could impair cellular functions, and by removing proteins whose functions are no longer required. Therefore, the proteasome participates in numerous cellular processes, including cell cycle progression, apoptosis, or DNA damage repair. Functionally, binds to the intracellular domain of tumor necrosis factor type 1 receptor. The binding domain of TRAP1 and TRAP2 resides outside the death domain of TNFR1. The chain is 26S proteasome non-ATPase regulatory subunit 2 (PSMD2) from Bos taurus (Bovine).